The sequence spans 368 residues: Phosphate acyltransferase (368 aa).

Belongs to the PlsX family. Homodimer. Probably interacts with PlsY.

The protein resides in the cytoplasm. The enzyme catalyses a fatty acyl-[ACP] + phosphate = an acyl phosphate + holo-[ACP]. It functions in the pathway lipid metabolism; phospholipid metabolism. In terms of biological role, catalyzes the reversible formation of acyl-phosphate (acyl-PO(4)) from acyl-[acyl-carrier-protein] (acyl-ACP). This enzyme utilizes acyl-ACP as fatty acyl donor, but not acyl-CoA. This is Phosphate acyltransferase from Methylibium petroleiphilum (strain ATCC BAA-1232 / LMG 22953 / PM1).